A 298-amino-acid polypeptide reads, in one-letter code: NAD-dependent L-serine dehydrogenase (298 aa).

Residues 2-31 (KQIA…NVFD), 65-66 (LP), Pro66, and Thr96 each bind NAD(+). Lys171 is an active-site residue. Lys246 is an NAD(+) binding site.

Belongs to the HIBADH-related family. Homotetramer, dimer of dimers.

It catalyses the reaction L-serine + NAD(+) = aminoacetaldehyde + CO2 + NADH. It functions in the pathway amino-acid degradation. In terms of biological role, NAD-dependent L-serine dehydrogenase that catalyzes the oxidation of L-serine and methyl-L-serine and is possibly involved in serine catabolism. Has low activity toward beta-hydroxyisobutyrate. The polypeptide is NAD-dependent L-serine dehydrogenase (Pseudomonas aeruginosa (strain ATCC 15692 / DSM 22644 / CIP 104116 / JCM 14847 / LMG 12228 / 1C / PRS 101 / PAO1)).